Consider the following 382-residue polypeptide: uncharacterized protein (382 aa).

A run of 12 helical transmembrane segments spans residues 14 to 34 (GLLLLTLAIAVLNTLVPLWLA), 45 to 65 (VVSSSYFTGNLVGTLLTGYVI), 75 to 95 (YLASFIFAAGCAGLGLMIGFW), 102 to 122 (FVAGVGCAMIWVVVESALMCS), 131 to 151 (LLAAYMMVYYVGTFLGQLLVS), 157 to 177 (LMSVLPWVTGLTLAGILPLLF), 206 to 226 (VNGCIISGIVLGSLYGLMPLF), 235 to 255 (ASIGFWMAVLVSAGILGQWPI), 270 to 290 (VQVFVVILGSIAMLSQAAMAP), 291 to 311 (ALFILGAAGFTLYPVAMAWAC), 325 to 345 (ALLLSYTVGSLLGPSFTAMLM), and 348 to 368 (FSDNLLFIMIASVSFIYLLML).

Belongs to the major facilitator superfamily. YcaD (TC 2.A.1.26) family.

It localises to the cell inner membrane. This is an uncharacterized protein from Escherichia coli O17:K52:H18 (strain UMN026 / ExPEC).